A 384-amino-acid chain; its full sequence is Galactokinase (384 aa).

Residue 34 to 37 coordinates substrate; that stretch reads EHTD. 123–129 lines the ATP pocket; it reads SSGLSSS. The Mg(2+) site is built by serine 129 and glutamate 161. The active-site Proton acceptor is the aspartate 173. Position 222 (tyrosine 222) interacts with substrate.

This sequence belongs to the GHMP kinase family. GalK subfamily.

The protein resides in the cytoplasm. The enzyme catalyses alpha-D-galactose + ATP = alpha-D-galactose 1-phosphate + ADP + H(+). The protein operates within carbohydrate metabolism; galactose metabolism. Catalyzes the transfer of the gamma-phosphate of ATP to D-galactose to form alpha-D-galactose-1-phosphate (Gal-1-P). This Haemophilus influenzae (strain ATCC 51907 / DSM 11121 / KW20 / Rd) protein is Galactokinase.